The chain runs to 237 residues: Phosphoadenosine 5'-phosphosulfate reductase (237 aa).

C231 acts as the Nucleophile; cysteine thiosulfonate intermediate in catalysis.

It belongs to the PAPS reductase family. CysH subfamily.

The protein resides in the cytoplasm. It carries out the reaction [thioredoxin]-disulfide + sulfite + adenosine 3',5'-bisphosphate + 2 H(+) = [thioredoxin]-dithiol + 3'-phosphoadenylyl sulfate. Its pathway is sulfur metabolism; hydrogen sulfide biosynthesis; sulfite from sulfate: step 3/3. Catalyzes the formation of sulfite from phosphoadenosine 5'-phosphosulfate (PAPS) using thioredoxin as an electron donor. The protein is Phosphoadenosine 5'-phosphosulfate reductase of Xylella fastidiosa (strain M23).